A 311-amino-acid polypeptide reads, in one-letter code: Nudix hydrolase 9 (311 aa).

One can recognise a Nudix hydrolase domain in the interval 131-298 (SSPLGNGAVI…GFALYELMLQ (168 aa)). The Nudix box signature appears at 192 to 213 (LNKKVTQEMFDSIICEVVEETG). Mg(2+) contacts are provided by Glu-207 and Glu-211.

The protein belongs to the Nudix hydrolase family. It depends on Mg(2+) as a cofactor. Requires Mn(2+) as cofactor. In terms of tissue distribution, expressed in roots, stems and leaves.

In terms of biological role, probably mediates the hydrolysis of some nucleoside diphosphate derivatives. The chain is Nudix hydrolase 9 (NUDT9) from Arabidopsis thaliana (Mouse-ear cress).